A 302-amino-acid polypeptide reads, in one-letter code: 4-hydroxy-tetrahydrodipicolinate synthase (302 aa).

Residue threonine 46 coordinates pyruvate. The active-site Proton donor/acceptor is tyrosine 134. The active-site Schiff-base intermediate with substrate is the lysine 162. Pyruvate is bound at residue valine 204.

This sequence belongs to the DapA family. Homotetramer; dimer of dimers.

The protein resides in the cytoplasm. It catalyses the reaction L-aspartate 4-semialdehyde + pyruvate = (2S,4S)-4-hydroxy-2,3,4,5-tetrahydrodipicolinate + H2O + H(+). It participates in amino-acid biosynthesis; L-lysine biosynthesis via DAP pathway; (S)-tetrahydrodipicolinate from L-aspartate: step 3/4. Its function is as follows. Catalyzes the condensation of (S)-aspartate-beta-semialdehyde [(S)-ASA] and pyruvate to 4-hydroxy-tetrahydrodipicolinate (HTPA). This is 4-hydroxy-tetrahydrodipicolinate synthase from Xylella fastidiosa (strain Temecula1 / ATCC 700964).